We begin with the raw amino-acid sequence, 314 residues long: 2,3-dihydroxyphenylpropionate/2,3-dihydroxicinnamic acid 1,2-dioxygenase 2 (314 aa).

The active-site Proton donor is His115. His179 (proton acceptor) is an active-site residue.

It belongs to the LigB/MhpB extradiol dioxygenase family. In terms of assembly, homotetramer. The cofactor is Fe(2+).

The enzyme catalyses 3-(2,3-dihydroxyphenyl)propanoate + O2 = (2Z,4E)-2-hydroxy-6-oxonona-2,4-dienedioate + H(+). It catalyses the reaction (2E)-3-(2,3-dihydroxyphenyl)prop-2-enoate + O2 = (2Z,4E,7E)-2-hydroxy-6-oxonona-2,4,7-trienedioate + H(+). Its pathway is aromatic compound metabolism; 3-phenylpropanoate degradation. Functionally, catalyzes the non-heme iron(II)-dependent oxidative cleavage of 2,3-dihydroxyphenylpropionic acid and 2,3-dihydroxicinnamic acid into 2-hydroxy-6-ketononadienedioate and 2-hydroxy-6-ketononatrienedioate, respectively. This is 2,3-dihydroxyphenylpropionate/2,3-dihydroxicinnamic acid 1,2-dioxygenase 2 (mhpB2) from Pseudomonas putida (Arthrobacter siderocapsulatus).